Reading from the N-terminus, the 163-residue chain is Secreted RxLR effector protein 135 (163 aa).

An N-terminal signal peptide occupies residues methionine 1 to glycine 20. Residues arginine 33–arginine 45 carry the RxLR-dEER motif. The interval lysine 94–glycine 127 is disordered.

This sequence belongs to the RxLR effector family.

It localises to the secreted. The protein localises to the host nucleus. It is found in the host cytoplasm. Its function is as follows. Secreted effector that completely suppresses the host cell death induced by cell death-inducing proteins. This is Secreted RxLR effector protein 135 from Plasmopara viticola (Downy mildew of grapevine).